The following is a 356-amino-acid chain: Cysteine proteinase 3 (356 aa).

The first 16 residues, 1 to 16, serve as a signal peptide directing secretion; the sequence is MSRLSLVLILVAGLFA. Residues 17–138 constitute a propeptide, activation peptide; it reads TALAGPATFA…KGNLKLTNVV (122 aa). Asparagine 123 is a glycosylation site (N-linked (GlcNAc...) asparagine). Cystine bridges form between cysteine 160-cysteine 203 and cysteine 194-cysteine 236. Residue cysteine 163 is part of the active site. N-linked (GlcNAc...) asparagine glycosylation is present at asparagine 252. A disulfide bond links cysteine 294 and cysteine 344. Catalysis depends on residues histidine 303 and asparagine 323.

This sequence belongs to the peptidase C1 family. As to expression, predominantly expressed in stem and root.

It is found in the vacuole. This Solanum lycopersicum (Tomato) protein is Cysteine proteinase 3 (CYP-3).